Reading from the N-terminus, the 447-residue chain is GTPase Der (447 aa).

2 EngA-type G domains span residues 3–167 (PVVA…HLED) and 180–353 (IKLA…KAAN). Residues 9–16 (GRPNVGKS), 56–60 (DTGGF), 119–122 (NKAE), 186–193 (GRPNVGKS), 233–237 (DTAGL), and 298–301 (NKWD) contribute to the GTP site. Residues 354 to 438 (CKMSTPILTR…PMRIEFKSST (85 aa)) enclose the KH-like domain.

It belongs to the TRAFAC class TrmE-Era-EngA-EngB-Septin-like GTPase superfamily. EngA (Der) GTPase family. As to quaternary structure, associates with the 50S ribosomal subunit.

In terms of biological role, GTPase that plays an essential role in the late steps of ribosome biogenesis. The chain is GTPase Der from Albidiferax ferrireducens (strain ATCC BAA-621 / DSM 15236 / T118) (Rhodoferax ferrireducens).